A 393-amino-acid chain; its full sequence is SH3 domain-binding protein 5-like (393 aa).

2 disordered regions span residues 1–59 and 272–332; these read MAEL…LDPR and HARR…DTDT. Residue Thr13 is modified to Phosphothreonine. Residues 18-28 show a composition bias toward basic and acidic residues; that stretch reads LRPEVVEDEVP. Phosphoserine is present on residues Ser30 and Ser49. Coiled coils occupy residues 59–140 and 169–272; these read RIQE…YERA and WQEM…EQIH. Gly residues predominate over residues 304–313; the sequence is GDSGIEGAEG. Over residues 317–332 the composition is skewed to low complexity; it reads EEGSSLGPGPAPDTDT. Phosphoserine is present on residues Ser343, Ser350, Ser358, Ser362, and Ser378. Residues 364-393 form a disordered region; the sequence is DGQELGTRSGGRRGSDGGVRGGRHQRSVSL. Positions 384–393 are enriched in basic residues; it reads GGRHQRSVSL.

The protein belongs to the SH3BP5 family.

In terms of biological role, functions as a guanine nucleotide exchange factor (GEF) for RAB11A. This chain is SH3 domain-binding protein 5-like (SH3BP5L), found in Pongo abelii (Sumatran orangutan).